The primary structure comprises 120 residues: Large ribosomal subunit protein bL17 (120 aa).

The protein belongs to the bacterial ribosomal protein bL17 family. Part of the 50S ribosomal subunit. Contacts protein L32.

In Geobacillus sp. (strain WCH70), this protein is Large ribosomal subunit protein bL17.